A 538-amino-acid polypeptide reads, in one-letter code: Reticuline oxidase (538 aa).

Residues 1–23 (MENKTPIFFSLSIFLSLLNCALG) form the signal peptide. Residues Cys-30 and Cys-89 are joined by a disulfide bond. N-linked (GlcNAc...) asparagine glycosylation occurs at Asn-38. The region spanning 67 to 241 (LISKPSAIIL…YAWKIKLLPV (175 aa)) is the FAD-binding PCMH-type domain. Residues 104–166 (HSYEGLSYTS…SKLGFTAGWC (63 aa)) constitute a cross-link (6-(S-cysteinyl)-8alpha-(pros-histidyl)-FAD (His-Cys)). Asn-423 and Asn-471 each carry an N-linked (GlcNAc...) asparagine glycan.

Belongs to the oxygen-dependent FAD-linked oxidoreductase family. The cofactor is FAD. A metal cation serves as cofactor. Post-translationally, the FAD cofactor is bound via a bicovalent 6-S-cysteinyl, 8alpha-N1-histidyl FAD linkage.

The protein localises to the cytoplasmic vesicle. It carries out the reaction (S)-reticuline + O2 = (S)-scoulerine + H2O2 + H(+). It functions in the pathway alkaloid biosynthesis; (S)-scoulerine biosynthesis; (S)-scoulerine from (S)-reticuline: step 1/1. In terms of biological role, essential to the formation of benzophenanthridine alkaloids in the response of plants to pathogenic attack. Catalyzes the stereospecific conversion of the N-methyl moiety of (S)-reticuline into the berberine bridge carbon of (S)-scoulerine. This chain is Reticuline oxidase (BBE1), found in Eschscholzia californica (California poppy).